We begin with the raw amino-acid sequence, 433 residues long: Lipase 2 (433 aa).

The Involved in the stabilization of the negatively charged intermediate by the formation of the oxyanion hole motif lies at 165-167 (HGG). Serine 239 functions as the Charge relay system in the catalytic mechanism. Residues aspartate 361 and histidine 391 contribute to the active site.

It belongs to the 'GDXG' lipolytic enzyme family.

The enzyme catalyses a triacylglycerol + H2O = a diacylglycerol + a fatty acid + H(+). In Moraxella sp. (strain TA144), this protein is Lipase 2 (lip2).